Here is a 110-residue protein sequence, read N- to C-terminus: Large ribosomal subunit protein uL22 (110 aa).

It belongs to the universal ribosomal protein uL22 family. As to quaternary structure, part of the 50S ribosomal subunit.

In terms of biological role, this protein binds specifically to 23S rRNA; its binding is stimulated by other ribosomal proteins, e.g. L4, L17, and L20. It is important during the early stages of 50S assembly. It makes multiple contacts with different domains of the 23S rRNA in the assembled 50S subunit and ribosome. The globular domain of the protein is located near the polypeptide exit tunnel on the outside of the subunit, while an extended beta-hairpin is found that lines the wall of the exit tunnel in the center of the 70S ribosome. The sequence is that of Large ribosomal subunit protein uL22 from Mycoplasma mobile (strain ATCC 43663 / 163K / NCTC 11711) (Mesomycoplasma mobile).